Reading from the N-terminus, the 396-residue chain is Pinosylvin synthase 2 (396 aa).

60–63 (KFKR) contacts substrate. Residue Cys-170 is part of the active site. Substrate is bound by residues Leu-273 and 311 to 313 (GGR).

This sequence belongs to the thiolase-like superfamily. Chalcone/stilbene synthases family. As to quaternary structure, homodimer.

It is found in the cytoplasm. The catalysed reaction is (E)-cinnamoyl-CoA + 3 malonyl-CoA + 3 H(+) = (E)-pinosylvin + 4 CO2 + 4 CoA. It carries out the reaction 3-phenylpropanoyl-CoA + 3 malonyl-CoA + 3 H(+) = dihydropinosylvin + 4 CO2 + 4 CoA. Its pathway is phytoalexin biosynthesis; pinosylvin biosynthesis. Functionally, catalyzes the production of pinosylvin from cinnamoyl-CoA and malonyl-CoA, and dihydropinosylvin from dihydrocinnamoyl-CoA. The polypeptide is Pinosylvin synthase 2 (Pinus strobus (Eastern white pine)).